The following is a 396-amino-acid chain: ATP phosphoribosyltransferase regulatory subunit (396 aa).

It belongs to the class-II aminoacyl-tRNA synthetase family. HisZ subfamily. As to quaternary structure, heteromultimer composed of HisG and HisZ subunits.

The protein localises to the cytoplasm. It participates in amino-acid biosynthesis; L-histidine biosynthesis; L-histidine from 5-phospho-alpha-D-ribose 1-diphosphate: step 1/9. Its function is as follows. Required for the first step of histidine biosynthesis. May allow the feedback regulation of ATP phosphoribosyltransferase activity by histidine. The protein is ATP phosphoribosyltransferase regulatory subunit of Cellvibrio japonicus (strain Ueda107) (Pseudomonas fluorescens subsp. cellulosa).